The chain runs to 414 residues: 4-hydroxy-3-methylbut-2-en-1-yl diphosphate synthase (flavodoxin) (414 aa).

Positions 304, 307, 350, and 357 each coordinate [4Fe-4S] cluster.

Belongs to the IspG family. [4Fe-4S] cluster is required as a cofactor.

It carries out the reaction (2E)-4-hydroxy-3-methylbut-2-enyl diphosphate + oxidized [flavodoxin] + H2O + 2 H(+) = 2-C-methyl-D-erythritol 2,4-cyclic diphosphate + reduced [flavodoxin]. Its pathway is isoprenoid biosynthesis; isopentenyl diphosphate biosynthesis via DXP pathway; isopentenyl diphosphate from 1-deoxy-D-xylulose 5-phosphate: step 5/6. Its function is as follows. Converts 2C-methyl-D-erythritol 2,4-cyclodiphosphate (ME-2,4cPP) into 1-hydroxy-2-methyl-2-(E)-butenyl 4-diphosphate. This is 4-hydroxy-3-methylbut-2-en-1-yl diphosphate synthase (flavodoxin) from Aromatoleum aromaticum (strain DSM 19018 / LMG 30748 / EbN1) (Azoarcus sp. (strain EbN1)).